The chain runs to 209 residues: Uracil phosphoribosyltransferase (209 aa).

Residues arginine 79, arginine 104, and 131 to 139 (DPMLATGGS) each bind 5-phospho-alpha-D-ribose 1-diphosphate. Residues isoleucine 194 and 199 to 201 (GDA) contribute to the uracil site. Aspartate 200 contributes to the 5-phospho-alpha-D-ribose 1-diphosphate binding site.

Belongs to the UPRTase family. Mg(2+) is required as a cofactor.

The enzyme catalyses UMP + diphosphate = 5-phospho-alpha-D-ribose 1-diphosphate + uracil. It participates in pyrimidine metabolism; UMP biosynthesis via salvage pathway; UMP from uracil: step 1/1. Allosterically activated by GTP. In terms of biological role, catalyzes the conversion of uracil and 5-phospho-alpha-D-ribose 1-diphosphate (PRPP) to UMP and diphosphate. This Streptococcus suis (strain 05ZYH33) protein is Uracil phosphoribosyltransferase.